The primary structure comprises 322 residues: MKILGIETSHDDASVALFSENKVEILLTISQFELHEQFGGTVPELASREHSRNLAIILEKLLGKNIDFSTIDAIAYTKNPGLIGPLKIGFLFASALSLFFNKPLIPIDHLLGHFWSAAIENDLEFPVLSLLISGGHTQLIFAENKNNLEIIGSTVDDALGEIYDKIGRSLGCGYPGGPKIDLIWQQNNVRNMELIDFSLPKVLENPLDFSFSGLKTQVINYTNNLKENYLFSQKKVVEIAVSFQKTVIKYLKRQLDLALKTKKNVKTITLVGGVAANSEIRKLIKTYENKYKVVIPKKEFCTDNGAMIAKAAQIFLKFNEEK.

Fe cation contacts are provided by His-109 and His-113. Residues 131–135 (LISGG), Asp-164, Gly-177, Asp-181, and Asn-277 contribute to the substrate site. Asp-303 lines the Fe cation pocket.

It belongs to the KAE1 / TsaD family. Fe(2+) serves as cofactor.

Its subcellular location is the cytoplasm. The catalysed reaction is L-threonylcarbamoyladenylate + adenosine(37) in tRNA = N(6)-L-threonylcarbamoyladenosine(37) in tRNA + AMP + H(+). Its function is as follows. Required for the formation of a threonylcarbamoyl group on adenosine at position 37 (t(6)A37) in tRNAs that read codons beginning with adenine. Is involved in the transfer of the threonylcarbamoyl moiety of threonylcarbamoyl-AMP (TC-AMP) to the N6 group of A37, together with TsaE and TsaB. TsaD likely plays a direct catalytic role in this reaction. The chain is tRNA N6-adenosine threonylcarbamoyltransferase from Mesomycoplasma hyopneumoniae (strain 232) (Mycoplasma hyopneumoniae).